The following is a 497-amino-acid chain: Catalase-2 (497 aa).

Catalysis depends on residues histidine 71 and asparagine 144. Position 354 (tyrosine 354) interacts with heme.

It belongs to the catalase family. Heme is required as a cofactor.

It carries out the reaction 2 H2O2 = O2 + 2 H2O. In terms of biological role, catalase involved in the oxidative stress response serving to protect cells from toxicity. For instance plays a role in defending against oxidative damage induced by excessive copper stress. Not required for maintaining normal lifespan. This is Catalase-2 from Caenorhabditis elegans.